Reading from the N-terminus, the 355-residue chain is UDP-N-acetylglucosamine--N-acetylmuramyl-(pentapeptide) pyrophosphoryl-undecaprenol N-acetylglucosamine transferase (355 aa).

UDP-N-acetyl-alpha-D-glucosamine-binding positions include 15 to 17 (TGG), Asn127, Arg163, Ser191, Ile244, 263 to 268 (ALTVSE), and Gln288.

This sequence belongs to the glycosyltransferase 28 family. MurG subfamily.

It localises to the cell inner membrane. The catalysed reaction is di-trans,octa-cis-undecaprenyl diphospho-N-acetyl-alpha-D-muramoyl-L-alanyl-D-glutamyl-meso-2,6-diaminopimeloyl-D-alanyl-D-alanine + UDP-N-acetyl-alpha-D-glucosamine = di-trans,octa-cis-undecaprenyl diphospho-[N-acetyl-alpha-D-glucosaminyl-(1-&gt;4)]-N-acetyl-alpha-D-muramoyl-L-alanyl-D-glutamyl-meso-2,6-diaminopimeloyl-D-alanyl-D-alanine + UDP + H(+). It participates in cell wall biogenesis; peptidoglycan biosynthesis. Cell wall formation. Catalyzes the transfer of a GlcNAc subunit on undecaprenyl-pyrophosphoryl-MurNAc-pentapeptide (lipid intermediate I) to form undecaprenyl-pyrophosphoryl-MurNAc-(pentapeptide)GlcNAc (lipid intermediate II). The chain is UDP-N-acetylglucosamine--N-acetylmuramyl-(pentapeptide) pyrophosphoryl-undecaprenol N-acetylglucosamine transferase from Salmonella gallinarum (strain 287/91 / NCTC 13346).